The primary structure comprises 208 residues: Holliday junction resolvase RecU (208 aa).

Mg(2+) is bound by residues T86, D88, E101, and Q120.

Belongs to the RecU family. It depends on Mg(2+) as a cofactor.

Its subcellular location is the cytoplasm. It catalyses the reaction Endonucleolytic cleavage at a junction such as a reciprocal single-stranded crossover between two homologous DNA duplexes (Holliday junction).. Its function is as follows. Endonuclease that resolves Holliday junction intermediates in genetic recombination. Cleaves mobile four-strand junctions by introducing symmetrical nicks in paired strands. Promotes annealing of linear ssDNA with homologous dsDNA. Required for DNA repair, homologous recombination and chromosome segregation. This Lacticaseibacillus casei (strain BL23) (Lactobacillus casei) protein is Holliday junction resolvase RecU.